Consider the following 180-residue polypeptide: Inner membrane-spanning protein YciB (180 aa).

5 helical membrane-spanning segments follow: residues 22-42 (IFVA…FTWL), 50-70 (MTLV…AFHS), 72-92 (LFIK…LLVS), 121-141 (LSWA…AFWL), and 149-169 (FKVF…GVYI).

Belongs to the YciB family.

The protein localises to the cell inner membrane. Functionally, plays a role in cell envelope biogenesis, maintenance of cell envelope integrity and membrane homeostasis. In Yersinia pseudotuberculosis serotype O:1b (strain IP 31758), this protein is Inner membrane-spanning protein YciB.